The primary structure comprises 122 residues: Bet1-like SNARE 1-1 (122 aa).

Residues 1-103 (MNPRREPRGG…VFETKSSRRM (103 aa)) lie on the Cytoplasmic side of the membrane. Residues 32–94 (EINEHENERA…SGTMDRFKTV (63 aa)) enclose the t-SNARE coiled-coil homology domain. Phosphoserine is present on S56. The chain crosses the membrane as a helical; Anchor for type IV membrane protein span at residues 104–121 (LTLVASFVGLFLVIYYLT). Residue R122 is a topological domain, vesicular.

It belongs to the BET1 family.

It localises to the golgi apparatus membrane. It is found in the endoplasmic reticulum membrane. Functionally, required for vesicular transport from the ER to the Golgi complex. Functions as a SNARE associated with ER-derived vesicles. This is Bet1-like SNARE 1-1 (BET11) from Arabidopsis thaliana (Mouse-ear cress).